We begin with the raw amino-acid sequence, 78 residues long: D-alanyl carrier protein (78 aa).

The region spanning 1-77 (MAVKEEVVEI…KVIAKVESLI (77 aa)) is the Carrier domain. Serine 35 is modified (O-(pantetheine 4'-phosphoryl)serine).

This sequence belongs to the DltC family. 4'-phosphopantetheine is transferred from CoA to a specific serine of apo-DCP.

The protein resides in the cytoplasm. It functions in the pathway cell wall biogenesis; lipoteichoic acid biosynthesis. Carrier protein involved in the D-alanylation of lipoteichoic acid (LTA). The loading of thioester-linked D-alanine onto DltC is catalyzed by D-alanine--D-alanyl carrier protein ligase DltA. The DltC-carried D-alanyl group is further transferred to cell membrane phosphatidylglycerol (PG) by forming an ester bond, probably catalyzed by DltD. D-alanylation of LTA plays an important role in modulating the properties of the cell wall in Gram-positive bacteria, influencing the net charge of the cell wall. The sequence is that of D-alanyl carrier protein from Leuconostoc citreum (strain KM20).